The sequence spans 206 residues: Uridine kinase (206 aa).

11–18 is an ATP binding site; it reads GGTGSGKS.

Belongs to the uridine kinase family.

The protein localises to the cytoplasm. It catalyses the reaction uridine + ATP = UMP + ADP + H(+). The enzyme catalyses cytidine + ATP = CMP + ADP + H(+). Its pathway is pyrimidine metabolism; CTP biosynthesis via salvage pathway; CTP from cytidine: step 1/3. It participates in pyrimidine metabolism; UMP biosynthesis via salvage pathway; UMP from uridine: step 1/1. The protein is Uridine kinase of Clostridium botulinum (strain Kyoto / Type A2).